We begin with the raw amino-acid sequence, 354 residues long: MNIWVIADDRTGNTHQAIALAAQLTGKYTTITLEYNFLAKLPNFLLQYYPIHIKRELLQDIIDKLPPDMIITAGRRTAVLAFYLKKKFENIKLVQIMQPNLPYNIFDAIILPYHDYRDLLYCGPAKILSKNIKSHCKVLNYSSRQHDIEKMMKIIPINGALNNITAKFSAASLELQKHYPHLKQFTAVIIGGNNKRFSFNEDIAILFSSLLNKIYSNQAIPFFISFSRRTPQIVKSIIKNNTHASTMIYDPSKDTDYNNPYIDMLANAKYIISTADSISMCSEAASSGKPLYIFYPPNFNSLKHKIFIEQLVEQKIARIFNESITMLEEYSYKPLNEAKKVAEIIKFALKINKS.

This is an uncharacterized protein from Rickettsia prowazekii (strain Madrid E).